We begin with the raw amino-acid sequence, 1131 residues long: MSVSATENDVPRFFVGCEESDELLDQSKPENLDNLYEHTEDEEDEEDDEYDSPPERQIVVGICAMAKKSKSKPMKEILERLSLFKYITVVIFEEEVILNETVENWPLCDCLISFHSKGFLLDKAVAYAKLRNPFVINDLNLQYQIQDRREVYRILTNEGIMLPRYAVLNRDPNKPEECNLIEGEDHVEVNGEIFQKPFVEKPVSAEDHNVYIYYPTSAGGGSQRLFRKIGSRSSVYSPESSVRKTGSYIYEEFMPTDGTDVKVYTVGPDYAHAEARKSPALDGKVERDSEGKEVRYPVILNAREKLIAWKVCLAFKQTVCGFDLLRASGQSYVCDVNGFSFVKNSMKYYDDCAKILGNIIMRELAPVFHIPWSIPLEAEDIPIVPTTSGTKMELRCVIAVIRHGDRTPKQKMKMEVRHQRFFDLFEKYHGYKTGKIKLKKPKQLQEVLDIARQLLVELGQNNDSEIEESKAKLEQLKTVLEMYGHFSGINRKVQLTYLPHGCPKTSSEEEDCRREEPSLLLVLKWGGELTPAGRVQAEELGRAFRCMYPGGQGDYAGFPGCGLLRLHSTYRHDLKIYASDEGRVQMTAAAFAKGLLALEGELTPILVQMVKSANMNGLLDSDSDSLSSCQHRVKARLHEILQRDRDFSSEDFEKLSPTGSVSQIKSMHFIKNPVKTCDKVYSLIQSLTSQIRQRMEDPKFADIQLYHSETLELMLRRWSKLEKDFKTKNGRYDISKIPDIYDCIKYDVQHNCSLKLENTMELYRLSKALADIVIPQEYGISRPEKLEIAKGYCTPLVRKIRSDLQRTQDDDTVNKLHPLYSRGVMSPERHVRTRLYFTSESHVHSLLSILRFGALCDETKDEQWKRAMDYLNVVSELNYMTQIVIMLYEDPNKDVSSEERFHVELHFSPGAKGCEEDKNLPSGFGYRPASQENESSKKHTHANDSDEDLGVCRRDEPDRALVMFKPMVSDPIHIHRKSPLPRSRKIGSVEVLSDNNSHLRTARLLEQKHIGLGFELYSMVPSICPLETLHNSLSLKQVDEFLSAVAAPSSDYQMDTPTASPSTPGFYTYVGGRKISLNTYTPTKILPPLFPVSTDVEMSDSVFQSCSSTSMVPGLAGSADNTERNHQAQDD.

Positions 21–53 (DELLDQSKPENLDNLYEHTEDEEDEEDDEYDSP) are disordered. A compositionally biased stretch (basic and acidic residues) spans 25-38 (DQSKPENLDNLYEH). Over residues 39–52 (TEDEEDEEDDEYDS) the composition is skewed to acidic residues. 67 to 68 (KK) provides a ligand contact to substrate. ATP-binding positions include arginine 148, lysine 201, histidine 208, arginine 227, 251–254 (EEFM), and 260–262 (DVK). 227–228 (RK) serves as a coordination point for substrate. Substrate is bound by residues lysine 262 and arginine 276. ATP is bound by residues serine 278, aspartate 323, and 335–337 (DVN). 340–343 (SFVK) is a binding site for substrate. The tract at residues 385–456 (PTTSGTKMEL…VLDIARQLLV (72 aa)) is polyphosphoinositide-binding domain. The disordered stretch occupies residues 912–951 (KGCEEDKNLPSGFGYRPASQENESSKKHTHANDSDEDLGV). Basic and acidic residues predominate over residues 934–951 (ESSKKHTHANDSDEDLGV).

It belongs to the histidine acid phosphatase family. VIP1 subfamily.

Its subcellular location is the cytoplasm. It localises to the cytosol. It catalyses the reaction 1D-myo-inositol hexakisphosphate + ATP = 1-diphospho-1D-myo-inositol 2,3,4,5,6-pentakisphosphate + ADP. The enzyme catalyses 5-diphospho-1D-myo-inositol 1,2,3,4,6-pentakisphosphate + ATP + H(+) = 1,5-bis(diphospho)-1D-myo-inositol 2,3,4,6-tetrakisphosphate + ADP. Its function is as follows. Bifunctional inositol kinase that acts in concert with the IP6K kinases IP6K1, IP6K2 and IP6K3 to synthesize the diphosphate group-containing inositol pyrophosphates diphosphoinositol pentakisphosphate, PP-InsP5, and bis-diphosphoinositol tetrakisphosphate, (PP)2-InsP4. PP-InsP5 and (PP)2-InsP4, also respectively called InsP7 and InsP8, regulate a variety of cellular processes, including apoptosis, vesicle trafficking, cytoskeletal dynamics, exocytosis, insulin signaling and neutrophil activation. Phosphorylates inositol hexakisphosphate (InsP6) at position 1 to produce PP-InsP5 which is in turn phosphorylated by IP6Ks to produce (PP)2-InsP4. Alternatively, phosphorylates PP-InsP5 at position 1, produced by IP6Ks from InsP6, to produce (PP)2-InsP4. The protein is Inositol hexakisphosphate and diphosphoinositol-pentakisphosphate kinase 2 of Xenopus laevis (African clawed frog).